Reading from the N-terminus, the 72-residue chain is DNA-directed RNA polymerase subunit omega (72 aa).

This sequence belongs to the RNA polymerase subunit omega family. The RNAP catalytic core consists of 2 alpha, 1 beta, 1 beta' and 1 omega subunit. When a sigma factor is associated with the core the holoenzyme is formed, which can initiate transcription.

It carries out the reaction RNA(n) + a ribonucleoside 5'-triphosphate = RNA(n+1) + diphosphate. Functionally, promotes RNA polymerase assembly. Latches the N- and C-terminal regions of the beta' subunit thereby facilitating its interaction with the beta and alpha subunits. The protein is DNA-directed RNA polymerase subunit omega of Campylobacter lari (strain RM2100 / D67 / ATCC BAA-1060).